The following is a 336-amino-acid chain: Nuclear envelope-associated protein 3 (336 aa).

Coiled coils occupy residues 14 to 87 (LKDL…IRAS) and 128 to 261 (VLSK…LKKK). The short motif at 240–261 (KTKELEDQVENQRRIDQELKKK) is the Bipartite nuclear localization signal element. A helical transmembrane segment spans residues 313-330 (LWDKSGFKIVVSMSMLIL).

In terms of assembly, forms homomers and heteromers with NEAP1 and NEAP2. Interacts with SUN1 and SUN2.

It is found in the nucleus inner membrane. It localises to the nucleus. The protein resides in the nucleoplasm. The protein is Nuclear envelope-associated protein 3 of Arabidopsis thaliana (Mouse-ear cress).